The sequence spans 268 residues: Magnesium dechelatase SGR1, chloroplastic (268 aa).

A chloroplast-targeting transit peptide spans 1-48; it reads MCSLSAIMLLPTKLKPAYSDKRSNSSSSSSLFFNNRRSKKKNQSIVPV.

Belongs to the staygreen family. Interacts with HCAR, the chlorophyll catabolic enzymes (CCEs) NYC1, PAO and RCCR, and the LHCII complex. Part of a SGR1-CCE-LHCII complex, which acts in chlorophyll breakdown. In terms of tissue distribution, expressed in roots, leaves, seeds, flowers, buds, petals, sepals and siliques.

The protein resides in the plastid. The protein localises to the chloroplast thylakoid membrane. It catalyses the reaction chlorophyll a + 2 H(+) = pheophytin a + Mg(2+). In terms of biological role, magnesium chelatase involved in chlorophyll a degradation in the chlorophyll-protein complexes of photosystem I (PSI) and photosystem II (PSII). Contributes to the degradation of PSI and PSII in the thylakoid membranes. Required to trigger chlorophyll degradation during natural and dark-induced leaf senescence. Mediates chlorophyll degradation during embryo degreening. Recombinant SGR1 possesses high dechelating activity against chlorophyll a, very low activity against chlorophyllide a, and no activity against chlorophyll b. Magnesium dechelation of chlorophyll a by SGR1 activates chlorophyll b degradation by inducing the expression of NYC1, an enzyme involved in chlorophyll b degradation. This chain is Magnesium dechelatase SGR1, chloroplastic, found in Arabidopsis thaliana (Mouse-ear cress).